A 157-amino-acid chain; its full sequence is Putative 4-hydroxy-4-methyl-2-oxoglutarate aldolase (157 aa).

Substrate contacts are provided by residues 78-81 (GDVI) and Arg100. Asp101 lines the a divalent metal cation pocket.

It belongs to the class II aldolase/RraA-like family. As to quaternary structure, homotrimer. Requires a divalent metal cation as cofactor.

It carries out the reaction 4-hydroxy-4-methyl-2-oxoglutarate = 2 pyruvate. The enzyme catalyses oxaloacetate + H(+) = pyruvate + CO2. Catalyzes the aldol cleavage of 4-hydroxy-4-methyl-2-oxoglutarate (HMG) into 2 molecules of pyruvate. Also contains a secondary oxaloacetate (OAA) decarboxylase activity due to the common pyruvate enolate transition state formed following C-C bond cleavage in the retro-aldol and decarboxylation reactions. The sequence is that of Putative 4-hydroxy-4-methyl-2-oxoglutarate aldolase from Mycobacterium leprae (strain Br4923).